The primary structure comprises 314 residues: NAD-dependent protein lipoamidase sirtuin-4, mitochondrial (314 aa).

The N-terminal 28 residues, 1-28 (MKMSFALTFRSAKGRWIANPSQPCSKAS), are a transit peptide targeting the mitochondrion. The Deacetylase sirtuin-type domain occupies 37–314 (PPLDPEKVKE…GELLPLIDPC (278 aa)). NAD(+) contacts are provided by residues 62 to 82 (GAGI…VGLY) and 143 to 146 (QNVD). Catalysis depends on His161, which acts as the Proton acceptor. The Zn(2+) site is built by Cys169, Cys172, Cys220, and Cys223. Residues 260 to 262 (GSS), 286 to 288 (NIG), and Cys304 contribute to the NAD(+) site.

It belongs to the sirtuin family. Class II subfamily. As to quaternary structure, interacts with GLUD1, IDE and SLC25A5. Interacts with DLAT and PDHX. Interacts with MCCC1 (via the biotin carboxylation domain). Interacts with PCCA and PC. It depends on Zn(2+) as a cofactor. In terms of tissue distribution, detected in vascular smooth muscle and striated muscle. Detected in insulin-producing beta-cells in pancreas islets of Langerhans (at protein level). Widely expressed. Weakly expressed in leukocytes and fetal thymus.

The protein localises to the mitochondrion matrix. The catalysed reaction is N(6)-[(R)-lipoyl]-L-lysyl-[protein] + NAD(+) + H2O = 2''-O-lipoyl-ADP-D-ribose + nicotinamide + L-lysyl-[protein]. It carries out the reaction N(6)-biotinyl-L-lysyl-[protein] + NAD(+) + H2O = 2''-O-biotinyl-ADP-D-ribose + nicotinamide + L-lysyl-[protein]. The enzyme catalyses N(6)-acetyl-L-lysyl-[protein] + NAD(+) + H2O = 2''-O-acetyl-ADP-D-ribose + nicotinamide + L-lysyl-[protein]. It catalyses the reaction L-cysteinyl-[protein] + NAD(+) = S-(ADP-D-ribosyl)-L-cysteinyl-[protein] + nicotinamide + H(+). Acts as a NAD-dependent protein lipoamidase, biotinylase, deacetylase and ADP-ribosyl transferase. Catalyzes more efficiently removal of lipoyl- and biotinyl- than acetyl-lysine modifications. Inhibits the pyruvate dehydrogenase complex (PDH) activity via the enzymatic hydrolysis of the lipoamide cofactor from the E2 component, DLAT, in a phosphorylation-independent manner. Catalyzes the transfer of ADP-ribosyl groups onto target proteins, including mitochondrial GLUD1, inhibiting GLUD1 enzyme activity. Acts as a negative regulator of mitochondrial glutamine metabolism by mediating mono ADP-ribosylation of GLUD1: expressed in response to DNA damage and negatively regulates anaplerosis by inhibiting GLUD1, leading to block metabolism of glutamine into tricarboxylic acid cycle and promoting cell cycle arrest. In response to mTORC1 signal, SIRT4 expression is repressed, promoting anaplerosis and cell proliferation. Acts as a tumor suppressor. Also acts as a NAD-dependent protein deacetylase: mediates deacetylation of 'Lys-471' of MLYCD, inhibiting its activity, thereby acting as a regulator of lipid homeostasis. Does not seem to deacetylate PC. Controls fatty acid oxidation by inhibiting PPARA transcriptional activation. Impairs SIRT1-PPARA interaction probably through the regulation of NAD(+) levels. Down-regulates insulin secretion. This chain is NAD-dependent protein lipoamidase sirtuin-4, mitochondrial, found in Homo sapiens (Human).